A 228-amino-acid polypeptide reads, in one-letter code: Cytochrome c biogenesis ATP-binding export protein CcmA (228 aa).

Positions 2-227 (LSIERLGVGR…LHLERSGAWL (226 aa)) constitute an ABC transporter domain. Residue 34–41 (GANGSGKT) participates in ATP binding. The interval 106–126 (GAPDGTSSVPASGRSGVAAPP) is disordered.

This sequence belongs to the ABC transporter superfamily. CcmA exporter (TC 3.A.1.107) family. The complex is composed of two ATP-binding proteins (CcmA) and two transmembrane proteins (CcmB).

It is found in the cell inner membrane. It catalyses the reaction heme b(in) + ATP + H2O = heme b(out) + ADP + phosphate + H(+). Functionally, part of the ABC transporter complex CcmAB involved in the biogenesis of c-type cytochromes; once thought to export heme, this seems not to be the case, but its exact role is uncertain. Responsible for energy coupling to the transport system. The polypeptide is Cytochrome c biogenesis ATP-binding export protein CcmA (Paraburkholderia xenovorans (strain LB400)).